The chain runs to 452 residues: Probable multidrug resistance protein NorM (452 aa).

12 helical membrane-spanning segments follow: residues 14–34 (LLHI…ITFL), 56–76 (LWTP…PIVA), 97–117 (VAAL…DLIL), 129–149 (IAKH…VYTV), 164–184 (MMIT…FIFG), 195–215 (GAGL…FFII), 244–264 (IGLP…AVTL), 284–304 (ASLL…VVGF), 319–339 (LIGI…ILLF), 360–380 (FLIY…IQGA), 392–412 (AAAF…VGTF), and 417–437 (AFGY…GLFF).

The protein belongs to the multi antimicrobial extrusion (MATE) (TC 2.A.66.1) family.

The protein localises to the cell membrane. Its function is as follows. Multidrug efflux pump. The protein is Probable multidrug resistance protein NorM (norM) of Bacillus subtilis (strain 168).